Here is a 158-residue protein sequence, read N- to C-terminus: Large ribosomal subunit protein bL17 (158 aa).

The segment at 119 to 158 (APAAAPEAEEKGEKKAAKAPKAEKAPKAEKKPAKKAAKAE) is disordered. Positions 126 to 158 (AEEKGEKKAAKAPKAEKAPKAEKKPAKKAAKAE) are enriched in basic and acidic residues.

Belongs to the bacterial ribosomal protein bL17 family. In terms of assembly, part of the 50S ribosomal subunit. Contacts protein L32.

This is Large ribosomal subunit protein bL17 from Anaeromyxobacter sp. (strain K).